The following is a 784-amino-acid chain: Transcription factor E4F1 (784 aa).

Positions 41–85 (GFLGLPAPFSEEDEDDVHRCGRCQAEFTALEDFVQHKIQKACQRA) are required for ubiquitin ligase activity. Residue Ser-50 is modified to Phosphoserine. The mediates dimerization, DNA-binding, transcription repression of CCNA2 and interaction with HMGA2 stretch occupies residues 184 to 263 (LLVNKDGRYV…GKSFRESGAL (80 aa)). C2H2-type zinc fingers lie at residues 192 to 214 (YVCALCHKTFKTGSILKAHMVTH) and 220 to 242 (HECKLCGASFRTKGSLIRHHRRH). The C2H2-type 3; degenerate zinc-finger motif lies at 248–272 (YKCSKCGKSFRESGALTRHLKSLTP). Residues 369–566 (NLLHQAMQNS…REKGSLVRHV (198 aa)) form a mediates interaction with CDKN2A region. 5 C2H2-type zinc fingers span residues 435–457 (HPCPQCSETFPTAATLEAHKRGH), 463–485 (FACAQCGKAFPKAYLLKKHQEVH), 491–513 (FRCGDCGKLYKTIAHVRGHRRVH), 519–541 (YPCPKCGKRYKTKNAQQVHFRTH), and 547–569 (HVCQFCSRGFREKGSLVRHVRHH). Residues 435 to 599 (HPCPQCSETF…LNRHLRTKGG (165 aa)) are interaction with BMI1. The segment at 521–580 (CPKCGKRYKTKNAQQVHFRTHLEEKPHVCQFCSRGFREKGSLVRHVRHHTGEKPFKCYKC) is mediates interaction with TP53. The C2H2-type 9; degenerate zinc-finger motif lies at 575-597 (FKCYKCGRGFAEHGTLNRHLRTK). Positions 575–597 (FKCYKCGRGFAEHGTLNRHLRTK) are mediates interaction with RASSF1.

Homodimer; binds DNA as a dimer. Forms a complex with CDKN2A and TP53. Interactions with TP53, RB1, ANP32A, BMI1 and FHL2 regulate E4F1 activity. Interacts with HDAC1, HMGA2 and RASSF1. In terms of assembly, (Microbial infection) Interacts with HBV protein X. Proteolytic cleavage produces a 50 kDa N-terminal peptide (p50E4F) which has a DNA-binding activity and activates transcription in presence of the adenoviral E1A protein. The major full-length protein (p120E4F) functions as a repressor of transcription. In terms of processing, phosphorylated; p120E4F and p50E4F are both phosphorylated. Phosphorylation is cell cycle-dependent and differentially regulates DNA-binding activity and function of both forms. Post-translationally, may be sumoylated by UBE2I upon interaction with CDKN2A. As to expression, ubiquitously expressed.

The protein resides in the nucleus. It localises to the nucleoplasm. It is found in the cytoplasm. The enzyme catalyses S-ubiquitinyl-[E2 ubiquitin-conjugating enzyme]-L-cysteine + [acceptor protein]-L-lysine = [E2 ubiquitin-conjugating enzyme]-L-cysteine + N(6)-ubiquitinyl-[acceptor protein]-L-lysine.. It participates in protein modification; protein ubiquitination. In terms of biological role, may function as a transcriptional repressor. May also function as a ubiquitin ligase mediating ubiquitination of chromatin-associated TP53. Functions in cell survival and proliferation through control of the cell cycle. Functions in the p53 and pRB tumor suppressor pathways and regulates the cyclin CCNA2 transcription. Identified as a cellular target of the adenoviral oncoprotein E1A, it is required for both transcriptional activation and repression of viral genes. This Homo sapiens (Human) protein is Transcription factor E4F1 (E4F1).